The sequence spans 458 residues: 5-hydroxytryptamine receptor 2C (458 aa).

Residues 1 to 32 (MVNLRNAVHSFLVHLIGLLVWQSDISVSPVAA) form the signal peptide. The Extracellular portion of the chain corresponds to 33–55 (IVTDIFNTSDGGRFKFPDGVQNW). An N-linked (GlcNAc...) asparagine glycan is attached at asparagine 39. The helical transmembrane segment at 56–80 (PALSIVIIIIMTIGGNILVIMAVSM) threads the bilayer. The Cytoplasmic portion of the chain corresponds to 81 to 86 (EKKLHN). Residues 87-111 (ATNYFLMSLAIADMLVGLLVMPLSL) traverse the membrane as a helical segment. At 112-128 (LAILYDYVWPLPRYLCP) the chain is on the extracellular side. The cysteines at positions 127 and 207 are disulfide-linked. The helical transmembrane segment at 129 to 151 (VWISLDVLFSTASIMHLCAISLD) threads the bilayer. Threonine 139 contacts ergotamine. Positions 151-153 (DRY) match the DRY motif; important for ligand-induced conformation changes motif. The Cytoplasmic portion of the chain corresponds to 152–167 (RYVAIRNPIEHSRFNS). The chain crosses the membrane as a helical span at residues 168-189 (RTKAIMKIAIVWAISIGVSVPI). The Extracellular segment spans residues 190-213 (PVIGLRDEEKVFVNNTTCVLNDPN). Residue asparagine 204 is glycosylated (N-linked (GlcNAc...) asparagine). Ergotamine is bound at residue leucine 209. A helical transmembrane segment spans residues 214–236 (FVLIGSFVAFFIPLTIMVITYCL). Residues 237–311 (TIYVLRRQAL…AINNERKASK (75 aa)) are Cytoplasmic-facing. The disordered stretch occupies residues 274 to 301 (EENSANPNQDQNARRRKKKERRPRGTMQ). The segment covering 287–297 (RRRKKKERRPR) has biased composition (basic residues). Residues 312 to 336 (VLGIVFFVFLIMWCPFFITNILSVL) form a helical membrane-spanning segment. Residues cysteine 337 and cysteine 341 are joined by a disulfide bond. Topologically, residues 337–347 (CEKSCNQKLME) are extracellular. A helical transmembrane segment spans residues 348-370 (KLLNVFVWIGYVCSGINPLVYTL). An NPxxY motif; important for ligand-induced conformation changes and signaling motif is present at residues 364–368 (NPLVY). Residues 371-458 (FNKIYRRAFS…SVVSERISSV (88 aa)) lie on the Cytoplasmic side of the membrane. Positions 456–458 (SSV) match the PDZ-binding motif.

It belongs to the G-protein coupled receptor 1 family. As to quaternary structure, interacts with MPDZ. Interacts with ARRB2. Interacts with MPP3; this interaction stabilizes the receptor at the plasma membrane and prevents the desensitization of the HTR2C receptor-mediated calcium response. N-glycosylated. In terms of tissue distribution, detected in brain.

It localises to the cell membrane. Inhibited by inverse agonist ritanserin. G-protein coupled receptor for 5-hydroxytryptamine (serotonin). Also functions as a receptor for various drugs and psychoactive substances, including ergot alkaloid derivatives, 1-2,5,-dimethoxy-4-iodophenyl-2-aminopropane (DOI) and lysergic acid diethylamide (LSD). Ligand binding causes a conformation change that triggers signaling via guanine nucleotide-binding proteins (G proteins) and modulates the activity of downstream effectors. HTR2C is coupled to G(q)/G(11) G alpha proteins and activates phospholipase C-beta, releasing diacylglycerol (DAG) and inositol 1,4,5-trisphosphate (IP3) second messengers that modulate the activity of phosphatidylinositol 3-kinase and promote the release of Ca(2+) ions from intracellular stores, respectively. Beta-arrestin family members inhibit signaling via G proteins and mediate activation of alternative signaling pathways. Regulates neuronal activity via the activation of short transient receptor potential calcium channels in the brain, and thereby modulates the activation of pro-opiomelanocortin neurons and the release of CRH that then regulates the release of corticosterone. Plays a role in the regulation of appetite and eating behavior, responses to anxiogenic stimuli and stress. Plays a role in insulin sensitivity and glucose homeostasis. This Homo sapiens (Human) protein is 5-hydroxytryptamine receptor 2C.